The chain runs to 278 residues: Large ribosomal subunit protein uL2 (278 aa).

2 disordered regions span residues 29–57 (PEKSLVRPLHSKGGRNNAGRVTVRHQGGG) and 224–278 (VAMN…NKKR). Basic residues predominate over residues 258–278 (RSPKKASNKYIVRRRKTNKKR).

It belongs to the universal ribosomal protein uL2 family. Part of the 50S ribosomal subunit. Forms a bridge to the 30S subunit in the 70S ribosome.

Its function is as follows. One of the primary rRNA binding proteins. Required for association of the 30S and 50S subunits to form the 70S ribosome, for tRNA binding and peptide bond formation. It has been suggested to have peptidyltransferase activity; this is somewhat controversial. Makes several contacts with the 16S rRNA in the 70S ribosome. The sequence is that of Large ribosomal subunit protein uL2 from Streptomyces griseus subsp. griseus (strain JCM 4626 / CBS 651.72 / NBRC 13350 / KCC S-0626 / ISP 5235).